Here is a 160-residue protein sequence, read N- to C-terminus: Early E3 18.5 kDa glycoprotein (160 aa).

An N-terminal signal peptide occupies residues Met1–Gly17. Residues Thr18–Gly124 lie on the Lumenal side of the membrane. Cystine bridges form between Cys29–Cys46 and Cys40–Cys101. N-linked (GlcNAc...) asparagine; by host glycans are attached at residues Asn30 and Asn79. The chain crosses the membrane as a helical span at residues Thr125–Ile145. The Cytoplasmic segment spans residues Lys146 to Pro160. The Di-lysine motif motif lies at Lys157–Pro160.

This sequence belongs to the adenoviridae E19 family. Both disulfide bonds are absolutely critical for the interaction with MHC antigens. In terms of processing, N-glycosylated; high-mannose.

It is found in the host endoplasmic reticulum membrane. Binds and retains class I heavy chains in the endoplasmic reticulum during the early period of virus infection, thereby impairing their transport to the cell surface. Also delays the expression of class I alleles that it cannot affect by direct retention. Binds transporters associated with antigen processing (TAP) and acts as a tapasin inhibitor, preventing class I/TAP association. In consequence, infected cells are masked for immune recognition by cytotoxic T-lymphocytes. The polypeptide is Early E3 18.5 kDa glycoprotein (Homo sapiens (Human)).